We begin with the raw amino-acid sequence, 337 residues long: Putative carboxypeptidase TP_0688 (337 aa).

Residue Ser118 is the Nucleophile of the active site. Residues Glu234 and His302 each act as charge relay system in the active site.

Belongs to the peptidase S66 family.

This Treponema pallidum (strain Nichols) protein is Putative carboxypeptidase TP_0688.